The chain runs to 370 residues: tRNA-specific 2-thiouridylase MnmA (370 aa).

Residues 7 to 14 and Met34 each bind ATP; that span reads ALSGGVDS. The tract at residues 104-106 is interaction with target base in tRNA; it reads NPD. The Nucleophile role is filled by Cys109. A disulfide bridge connects residues Cys109 and Cys202. An ATP-binding site is contributed by Gly134. The tract at residues 152–154 is interaction with tRNA; that stretch reads KDQ. The Cysteine persulfide intermediate role is filled by Cys202. Positions 308 to 309 are interaction with tRNA; the sequence is RY.

It belongs to the MnmA/TRMU family.

Its subcellular location is the cytoplasm. The catalysed reaction is S-sulfanyl-L-cysteinyl-[protein] + uridine(34) in tRNA + AH2 + ATP = 2-thiouridine(34) in tRNA + L-cysteinyl-[protein] + A + AMP + diphosphate + H(+). In terms of biological role, catalyzes the 2-thiolation of uridine at the wobble position (U34) of tRNA, leading to the formation of s(2)U34. In Mycoplasma mobile (strain ATCC 43663 / 163K / NCTC 11711) (Mesomycoplasma mobile), this protein is tRNA-specific 2-thiouridylase MnmA.